A 145-amino-acid chain; its full sequence is MSLWRQTPDLEQLNASQKNSIGDLLGIRFEAFDDESLTASMPVDSRTHQPFGLLHGGASVVLAESLGSMASYLCVDTSQYYCVGLEVNANHLRGLRSGRVTAVARAIHLGRTTHVWDIRLSGDDGKPSCIARLTMAVVPLAGRAG.

Belongs to the thioesterase PaaI family.

The chain is Putative esterase PA1618 from Pseudomonas aeruginosa (strain ATCC 15692 / DSM 22644 / CIP 104116 / JCM 14847 / LMG 12228 / 1C / PRS 101 / PAO1).